Reading from the N-terminus, the 342-residue chain is tRNA N6-adenosine threonylcarbamoyltransferase (342 aa).

Fe cation is bound by residues histidine 114 and histidine 118. Residues 136 to 140, aspartate 169, glycine 182, aspartate 186, and asparagine 275 each bind substrate; that span reads LVSGG. Residue aspartate 301 participates in Fe cation binding.

It belongs to the KAE1 / TsaD family. Fe(2+) serves as cofactor.

The protein localises to the cytoplasm. The catalysed reaction is L-threonylcarbamoyladenylate + adenosine(37) in tRNA = N(6)-L-threonylcarbamoyladenosine(37) in tRNA + AMP + H(+). Its function is as follows. Required for the formation of a threonylcarbamoyl group on adenosine at position 37 (t(6)A37) in tRNAs that read codons beginning with adenine. Is involved in the transfer of the threonylcarbamoyl moiety of threonylcarbamoyl-AMP (TC-AMP) to the N6 group of A37, together with TsaE and TsaB. TsaD likely plays a direct catalytic role in this reaction. This chain is tRNA N6-adenosine threonylcarbamoyltransferase, found in Streptococcus pyogenes serotype M4 (strain MGAS10750).